The primary structure comprises 204 residues: Large ribosomal subunit protein uL4 (204 aa).

The segment at 53–77 (ISDVSGTTAKPYSQKRTGRARQGSL) is disordered. The segment covering 56–67 (VSGTTAKPYSQK) has biased composition (polar residues).

This sequence belongs to the universal ribosomal protein uL4 family. Part of the 50S ribosomal subunit.

Functionally, one of the primary rRNA binding proteins, this protein initially binds near the 5'-end of the 23S rRNA. It is important during the early stages of 50S assembly. It makes multiple contacts with different domains of the 23S rRNA in the assembled 50S subunit and ribosome. Forms part of the polypeptide exit tunnel. The polypeptide is Large ribosomal subunit protein uL4 (Wolbachia sp. subsp. Brugia malayi (strain TRS)).